An 89-amino-acid polypeptide reads, in one-letter code: Small ribosomal subunit protein uS14A (89 aa).

This sequence belongs to the universal ribosomal protein uS14 family. As to quaternary structure, part of the 30S ribosomal subunit. Contacts proteins S3 and S10.

Its function is as follows. Binds 16S rRNA, required for the assembly of 30S particles and may also be responsible for determining the conformation of the 16S rRNA at the A site. The sequence is that of Small ribosomal subunit protein uS14A from Pediococcus pentosaceus (strain ATCC 25745 / CCUG 21536 / LMG 10740 / 183-1w).